A 405-amino-acid chain; its full sequence is L-carnitine CoA-transferase (405 aa).

CoA contacts are provided by Lys-97 and Arg-104. Asp-169 acts as the Nucleophile in catalysis.

Belongs to the CoA-transferase III family. CaiB subfamily. In terms of assembly, homodimer.

Its subcellular location is the cytoplasm. The catalysed reaction is crotonobetainyl-CoA + (R)-carnitine = crotonobetaine + (R)-carnitinyl-CoA. It catalyses the reaction 4-(trimethylamino)butanoyl-CoA + (R)-carnitine = (R)-carnitinyl-CoA + 4-(trimethylamino)butanoate. It participates in amine and polyamine metabolism; carnitine metabolism. In terms of biological role, catalyzes the reversible transfer of the CoA moiety from gamma-butyrobetainyl-CoA to L-carnitine to generate L-carnitinyl-CoA and gamma-butyrobetaine. Is also able to catalyze the reversible transfer of the CoA moiety from gamma-butyrobetainyl-CoA or L-carnitinyl-CoA to crotonobetaine to generate crotonobetainyl-CoA. The protein is L-carnitine CoA-transferase of Escherichia fergusonii (strain ATCC 35469 / DSM 13698 / CCUG 18766 / IAM 14443 / JCM 21226 / LMG 7866 / NBRC 102419 / NCTC 12128 / CDC 0568-73).